Consider the following 284-residue polypeptide: Bifunctional protein FolD (284 aa).

Residues 166–168 (GAS), serine 191, and isoleucine 232 each bind NADP(+).

This sequence belongs to the tetrahydrofolate dehydrogenase/cyclohydrolase family. As to quaternary structure, homodimer.

It carries out the reaction (6R)-5,10-methylene-5,6,7,8-tetrahydrofolate + NADP(+) = (6R)-5,10-methenyltetrahydrofolate + NADPH. The enzyme catalyses (6R)-5,10-methenyltetrahydrofolate + H2O = (6R)-10-formyltetrahydrofolate + H(+). The protein operates within one-carbon metabolism; tetrahydrofolate interconversion. Its function is as follows. Catalyzes the oxidation of 5,10-methylenetetrahydrofolate to 5,10-methenyltetrahydrofolate and then the hydrolysis of 5,10-methenyltetrahydrofolate to 10-formyltetrahydrofolate. The chain is Bifunctional protein FolD from Neisseria meningitidis serogroup A / serotype 4A (strain DSM 15465 / Z2491).